The chain runs to 183 residues: Ribose 1,5-bisphosphate phosphokinase PhnN (183 aa).

Belongs to the ribose 1,5-bisphosphokinase family.

The catalysed reaction is alpha-D-ribose 1,5-bisphosphate + ATP = 5-phospho-alpha-D-ribose 1-diphosphate + ADP. It participates in metabolic intermediate biosynthesis; 5-phospho-alpha-D-ribose 1-diphosphate biosynthesis; 5-phospho-alpha-D-ribose 1-diphosphate from D-ribose 5-phosphate (route II): step 3/3. Catalyzes the phosphorylation of ribose 1,5-bisphosphate to 5-phospho-D-ribosyl alpha-1-diphosphate (PRPP). The protein is Ribose 1,5-bisphosphate phosphokinase PhnN of Azotobacter vinelandii (strain DJ / ATCC BAA-1303).